Here is a 101-residue protein sequence, read N- to C-terminus: uncharacterized protein (101 aa).

This is an uncharacterized protein from Neurospora crassa (strain ATCC 24698 / 74-OR23-1A / CBS 708.71 / DSM 1257 / FGSC 987).